The following is a 345-amino-acid chain: MPITPQEALQRTIEHREIFHDEMVELMRQVMRGEVSDMMVAAILTGLRVKKETIGEIAGAATVMREFSRRVDVADRQHMVDIVGTGGDGSDTFNISTCAMFVAAAGGAKVAKHGNRSVSSKSGSADALEALGAVIELQPEQVASALAHTGIGFMYAPVHHPAMKVVAPVRREMGVRTIFNILGPLTNPAGSPNILMGVFHPDLVGIQARVLHELGAERALVVWGRDGMDELSLGAGTLVGELRDGQVREYEVHPEDFGIAMSASRNLKVADAAQSRAMLLQVLDNVPGPALDIVALNAGAALYVAGVAHSIADGVLRARAVIADGSARARVDAYVAYTRQLAVQA.

Residues glycine 84, 87–88 (GD), threonine 92, 94–97 (NIST), 112–120 (KHGNRSVSS), and serine 124 each bind 5-phospho-alpha-D-ribose 1-diphosphate. Anthranilate is bound at residue glycine 84. Residue serine 96 participates in Mg(2+) binding. Asparagine 115 contributes to the anthranilate binding site. Arginine 170 is a binding site for anthranilate. 2 residues coordinate Mg(2+): aspartate 229 and glutamate 230.

It belongs to the anthranilate phosphoribosyltransferase family. As to quaternary structure, homodimer. Mg(2+) serves as cofactor.

The enzyme catalyses N-(5-phospho-beta-D-ribosyl)anthranilate + diphosphate = 5-phospho-alpha-D-ribose 1-diphosphate + anthranilate. Its pathway is amino-acid biosynthesis; L-tryptophan biosynthesis; L-tryptophan from chorismate: step 2/5. Functionally, catalyzes the transfer of the phosphoribosyl group of 5-phosphorylribose-1-pyrophosphate (PRPP) to anthranilate to yield N-(5'-phosphoribosyl)-anthranilate (PRA). This chain is Anthranilate phosphoribosyltransferase, found in Xanthomonas euvesicatoria pv. vesicatoria (strain 85-10) (Xanthomonas campestris pv. vesicatoria).